The primary structure comprises 867 residues: MAASSSSSASASAMGGGGMRKAPSMEWRWVSTEEDDEGEEDGDTVEAAAAAVGAVGRGGSFGSEEEEDEEDGGGGGEGEGEGEDGEKQKLIRTVPSVDWFDVEGYEVSVAQHIEDSEEFDFGRTMFLALQTLAVVFGDIGISPLYTFDVMFSKYPILGEEDVLGALSLVLYTLISMPLVKYVLVVLWANDDGEGGIFALYSLICRNAKVSLIPNQVHSEKRMSSFRLKLPTPELERSIKVKEKLESSLLLKKLLLGLVLFGTAMFISNGVITPAMSVLSAVSGLKVGIPNASQGLVVMISVVLLVILYSVQRYATSKMGFALGPSLLIWFCCLGGIGIYNLSTYGPAAFKAFNPLYIIYYFGRNPFQAWLSLAGCLLCATGSEAIFANLSYFPVRYVQSMFALLVLPCLVLAYLGQGAFLIANQNSSEQIFFSSIPSGVFWPVFLIANLAALIASRTMTTAIFQCLKQSIALGCFPRLKIIHTSRKFMAKIYIPVVNWFLLFSCLGFILLFRSIYDVGNAYAIAELGVMIMATVYVTIIMLLIWETSIVKVLSFVITFLSLELVFFSSSLSSVGDGGWALIIFASGILMVMFIWNYGSKLKYDSEVKKKLSKDLMRKLGPNLGTIRAPGLGLVYSEIVKGVPAIFGHFLIALPAIHSIIVFVCIRNVPVPVVPQTERFLFQRVCTRGYHMFRCIARYGYKDKNQESQSTFERLLIEGLEKFIQREAVELSLQSGDDIDSDEEPPTPSRTIVAPNGSLYSLDVPLLADFVPSAEVIPEASCSTPQHDPVVDYTQNLELELAFIRQAKQSGAVYLIDNPIVKARKNSWFFKKLIINYFFAFLRNNCRRAMMSMSIPHTNVMQVRLTSYV.

Over residues 1-13 (MAASSSSSASASA) the composition is skewed to low complexity. The tract at residues 1–88 (MAASSSSSAS…EGEGEDGEKQ (88 aa)) is disordered. Residues 1 to 124 (MAASSSSSAS…DSEEFDFGRT (124 aa)) lie on the Cytoplasmic side of the membrane. Residues 32–44 (TEEDDEGEEDGDT) are compositionally biased toward acidic residues. Low complexity predominate over residues 45 to 54 (VEAAAAAVGA). Residues 63-84 (SEEEEDEEDGGGGGEGEGEGED) are compositionally biased toward acidic residues. Residues 125–145 (MFLALQTLAVVFGDIGISPLY) form a helical membrane-spanning segment. The Extracellular portion of the chain corresponds to 146–167 (TFDVMFSKYPILGEEDVLGALS). A helical transmembrane segment spans residues 168–188 (LVLYTLISMPLVKYVLVVLWA). Over 189–252 (NDDGEGGIFA…KLESSLLLKK (64 aa)) the chain is Cytoplasmic. The helical transmembrane segment at 253–273 (LLLGLVLFGTAMFISNGVITP) threads the bilayer. Residues 274 to 285 (AMSVLSAVSGLK) are Extracellular-facing. A helical membrane pass occupies residues 286–306 (VGIPNASQGLVVMISVVLLVI). Residues 307–317 (LYSVQRYATSK) are Cytoplasmic-facing. Residues 318 to 338 (MGFALGPSLLIWFCCLGGIGI) traverse the membrane as a helical segment. Residues 339-365 (YNLSTYGPAAFKAFNPLYIIYYFGRNP) lie on the Extracellular side of the membrane. An N-linked (GlcNAc...) asparagine glycan is attached at Asn-340. A helical transmembrane segment spans residues 366–386 (FQAWLSLAGCLLCATGSEAIF). At 387–400 (ANLSYFPVRYVQSM) the chain is on the cytoplasmic side. The helical transmembrane segment at 401–421 (FALLVLPCLVLAYLGQGAFLI) threads the bilayer. The Extracellular portion of the chain corresponds to 422-433 (ANQNSSEQIFFS). N-linked (GlcNAc...) asparagine glycosylation occurs at Asn-425. The helical transmembrane segment at 434-454 (SIPSGVFWPVFLIANLAALIA) threads the bilayer. The Cytoplasmic segment spans residues 455–490 (SRTMTTAIFQCLKQSIALGCFPRLKIIHTSRKFMAK). Residues 491–511 (IYIPVVNWFLLFSCLGFILLF) traverse the membrane as a helical segment. Residues 512–522 (RSIYDVGNAYA) are Extracellular-facing. Residues 523-543 (IAELGVMIMATVYVTIIMLLI) form a helical membrane-spanning segment. The Cytoplasmic segment spans residues 544 to 545 (WE). A helical membrane pass occupies residues 546–566 (TSIVKVLSFVITFLSLELVFF). Topologically, residues 567-572 (SSSLSS) are extracellular. The helical transmembrane segment at 573-593 (VGDGGWALIIFASGILMVMFI) threads the bilayer. Over 594–867 (WNYGSKLKYD…VMQVRLTSYV (274 aa)) the chain is Cytoplasmic.

This sequence belongs to the HAK/KUP transporter (TC 2.A.72.3) family.

The protein localises to the membrane. Its function is as follows. High-affinity potassium transporter. This is Probable potassium transporter 15 (HAK15) from Oryza sativa subsp. japonica (Rice).